The chain runs to 438 residues: Putative galacturan 1,4-alpha-galacturonidase A (438 aa).

A signal peptide spans 1-21 (MRMPSAISIGVFAGLSLAASA). Residues Asn-28, Asn-102, Asn-111, and Asn-197 are each glycosylated (N-linked (GlcNAc...) asparagine). PbH1 repeat units follow at residues 186–222 (SSHINLDNFYVNATNHDSSVSPEGEWVQNTDGIDTYR) and 223–244 (SDHITITNWVYQGGDDAVAFKG). Asp-237 (proton donor) is an active-site residue. N-linked (GlcNAc...) asparagine glycans are attached at residues Asn-245, Asn-253, Asn-279, Asn-325, Asn-353, Asn-372, and Asn-388. PbH1 repeat units follow at residues 246–266 (STNIHVENVTVYGGPGIAFGS), 277–303 (VENVTVRNVRVQPSFQRAMNSGVYFKS), and 323–344 (VRNVSVENLRLKDVQLPVYIDT). Cys-397 and Cys-403 are joined by a disulfide. Asn-418 carries N-linked (GlcNAc...) asparagine glycosylation.

Belongs to the glycosyl hydrolase 28 family.

The protein resides in the secreted. It catalyses the reaction [(1-&gt;4)-alpha-D-galacturonosyl](n) + H2O = alpha-D-galacturonate + [(1-&gt;4)-alpha-D-galacturonosyl](n-1). Its function is as follows. Specific in hydrolyzing the terminal glycosidic bond of polygalacturonic acid and oligogalacturonates. This is Putative galacturan 1,4-alpha-galacturonidase A (rgxA) from Aspergillus niger.